The sequence spans 103 residues: MYAVIKTGGKQYKVAAGEKLKIEQIPAEIGSEITLDQVLAVGEGASLKLGDPLVNGAAVMATVVSQGRHDKVTIFKMRRRKHYQKHQGHRQNFTEILINTIKA.

The protein belongs to the bacterial ribosomal protein bL21 family. Part of the 50S ribosomal subunit. Contacts protein L20.

Functionally, this protein binds to 23S rRNA in the presence of protein L20. This is Large ribosomal subunit protein bL21 from Polynucleobacter asymbioticus (strain DSM 18221 / CIP 109841 / QLW-P1DMWA-1) (Polynucleobacter necessarius subsp. asymbioticus).